A 174-amino-acid polypeptide reads, in one-letter code: NADH-ubiquinone oxidoreductase chain 6 (174 aa).

6 consecutive transmembrane segments (helical) span residues 1 to 21, 24 to 44, 47 to 67, 86 to 106, 111 to 131, and 151 to 171; these read MTYVLFLLSVSLVMGFVGFSS, SPIYGGLVLIVSGVVGCTIIL, GGGYMGLMVFLIYLGGMMVVF, VEVLVSVLVGLAMEVGLVLWV, GVVVVVNFNSVGSWMIYEGEG, and WLVVVTGWTLFVGVYIVIEIA.

This sequence belongs to the complex I subunit 6 family. As to quaternary structure, core subunit of respiratory chain NADH dehydrogenase (Complex I) which is composed of 45 different subunits.

It is found in the mitochondrion inner membrane. It carries out the reaction a ubiquinone + NADH + 5 H(+)(in) = a ubiquinol + NAD(+) + 4 H(+)(out). Functionally, core subunit of the mitochondrial membrane respiratory chain NADH dehydrogenase (Complex I) which catalyzes electron transfer from NADH through the respiratory chain, using ubiquinone as an electron acceptor. Essential for the catalytic activity and assembly of complex I. The sequence is that of NADH-ubiquinone oxidoreductase chain 6 (MT-ND6) from Pan paniscus (Pygmy chimpanzee).